The primary structure comprises 345 residues: Phosphoribosylformylglycinamidine cyclo-ligase (345 aa).

This sequence belongs to the AIR synthase family.

It is found in the cytoplasm. The catalysed reaction is 2-formamido-N(1)-(5-O-phospho-beta-D-ribosyl)acetamidine + ATP = 5-amino-1-(5-phospho-beta-D-ribosyl)imidazole + ADP + phosphate + H(+). The protein operates within purine metabolism; IMP biosynthesis via de novo pathway; 5-amino-1-(5-phospho-D-ribosyl)imidazole from N(2)-formyl-N(1)-(5-phospho-D-ribosyl)glycinamide: step 2/2. This is Phosphoribosylformylglycinamidine cyclo-ligase from Escherichia coli O127:H6 (strain E2348/69 / EPEC).